The chain runs to 99 residues: Phosphoribosyl-ATP pyrophosphatase (99 aa).

This sequence belongs to the PRA-PH family.

It is found in the cytoplasm. It catalyses the reaction 1-(5-phospho-beta-D-ribosyl)-ATP + H2O = 1-(5-phospho-beta-D-ribosyl)-5'-AMP + diphosphate + H(+). Its pathway is amino-acid biosynthesis; L-histidine biosynthesis; L-histidine from 5-phospho-alpha-D-ribose 1-diphosphate: step 2/9. This is Phosphoribosyl-ATP pyrophosphatase from Methanosphaerula palustris (strain ATCC BAA-1556 / DSM 19958 / E1-9c).